A 138-amino-acid polypeptide reads, in one-letter code: Basic phospholipase A2 myotoxin I (138 aa).

Positions 1-16 (MRTLWIMAVLLVGVEG) are cleaved as a signal peptide. Cystine bridges form between Cys42-Cys131, Cys44-Cys60, Cys59-Cys111, Cys65-Cys138, Cys66-Cys104, Cys73-Cys97, and Cys91-Cys102. Residues Tyr43, Gly45, and Gly47 each contribute to the Ca(2+) site. His63 is an active-site residue. Asp64 provides a ligand contact to Ca(2+). Asp105 is a catalytic residue.

Belongs to the phospholipase A2 family. Group II subfamily. D49 sub-subfamily. As to quaternary structure, monomer. Homodimer; non-covalently linked (alternative/compact dimer conformation). It depends on Ca(2+) as a cofactor. Expressed by the venom gland.

The protein resides in the secreted. The catalysed reaction is a 1,2-diacyl-sn-glycero-3-phosphocholine + H2O = a 1-acyl-sn-glycero-3-phosphocholine + a fatty acid + H(+). Its activity is regulated as follows. High level of membrane cholesterol content reduces cytolytic activity, whereas low level of membrane cholesterol content increases cytolytic activity. In terms of biological role, snake venom phospholipase A2 (PLA2) that displays local myotoxic activity. It also displays anticoagulant action in plasma and edema-inducing activities. In addition, it shows cytotoxic activity to a variety of cell types and bactericidal activity to a variety of Gram-negative and Gram-positive bacteria. PLA2 catalyzes the calcium-dependent hydrolysis of the 2-acyl groups in 3-sn-phosphoglycerides. This is Basic phospholipase A2 myotoxin I from Bothrops asper (Terciopelo).